The chain runs to 276 residues: Large ribosomal subunit protein uL2 (276 aa).

Positions 224–276 are disordered; the sequence is VAMNPVDHPHGGGEGKTGEGRVPVSPWGTPTKGYRTRRNKRTTSMIVQRRQKR. A compositionally biased stretch (basic and acidic residues) spans 230-242; sequence DHPHGGGEGKTGE.

It belongs to the universal ribosomal protein uL2 family. As to quaternary structure, part of the 50S ribosomal subunit. Forms a bridge to the 30S subunit in the 70S ribosome.

In terms of biological role, one of the primary rRNA binding proteins. Required for association of the 30S and 50S subunits to form the 70S ribosome, for tRNA binding and peptide bond formation. It has been suggested to have peptidyltransferase activity; this is somewhat controversial. Makes several contacts with the 16S rRNA in the 70S ribosome. In Polynucleobacter asymbioticus (strain DSM 18221 / CIP 109841 / QLW-P1DMWA-1) (Polynucleobacter necessarius subsp. asymbioticus), this protein is Large ribosomal subunit protein uL2.